A 342-amino-acid polypeptide reads, in one-letter code: Methionyl-tRNA formyltransferase (342 aa).

108–111 (SLLP) is a binding site for (6S)-5,6,7,8-tetrahydrofolate.

It belongs to the Fmt family.

It catalyses the reaction L-methionyl-tRNA(fMet) + (6R)-10-formyltetrahydrofolate = N-formyl-L-methionyl-tRNA(fMet) + (6S)-5,6,7,8-tetrahydrofolate + H(+). Attaches a formyl group to the free amino group of methionyl-tRNA(fMet). The formyl group appears to play a dual role in the initiator identity of N-formylmethionyl-tRNA by promoting its recognition by IF2 and preventing the misappropriation of this tRNA by the elongation apparatus. The protein is Methionyl-tRNA formyltransferase of Prochlorococcus marinus (strain MIT 9303).